Reading from the N-terminus, the 296-residue chain is uncharacterized protein (296 aa).

Residues 1-21 (MIFAVVDILEISIQLLCILLF) form a helical membrane-spanning segment.

It is found in the membrane. This is an uncharacterized protein from Caenorhabditis elegans.